Consider the following 503-residue polypeptide: Cytochrome P450 3A15 (503 aa).

Cys442 contributes to the heme binding site.

This sequence belongs to the cytochrome P450 family. It depends on heme as a cofactor.

The protein resides in the endoplasmic reticulum membrane. Its subcellular location is the microsome membrane. The enzyme catalyses an organic molecule + reduced [NADPH--hemoprotein reductase] + O2 = an alcohol + oxidized [NADPH--hemoprotein reductase] + H2O + H(+). In terms of biological role, cytochromes P450 are a group of heme-thiolate monooxygenases. In liver microsomes, this enzyme is involved in an NADPH-dependent electron transport pathway. It oxidizes a variety of structurally unrelated compounds, including steroids, fatty acids, and xenobiotics. This Cavia porcellus (Guinea pig) protein is Cytochrome P450 3A15 (CYP3A15).